The following is a 279-amino-acid chain: Release factor glutamine methyltransferase (279 aa).

S-adenosyl-L-methionine-binding positions include Gly118–Gly122, Asp141, and Asn182. Asn182–Tyr185 serves as a coordination point for substrate.

This sequence belongs to the protein N5-glutamine methyltransferase family. PrmC subfamily.

It carries out the reaction L-glutaminyl-[peptide chain release factor] + S-adenosyl-L-methionine = N(5)-methyl-L-glutaminyl-[peptide chain release factor] + S-adenosyl-L-homocysteine + H(+). Its function is as follows. Methylates the class 1 translation termination release factors RF1/PrfA and RF2/PrfB on the glutamine residue of the universally conserved GGQ motif. This is Release factor glutamine methyltransferase from Streptococcus pneumoniae (strain ATCC BAA-255 / R6).